The following is a 267-amino-acid chain: Apolipoprotein A-I (267 aa).

Positions 1–18 are cleaved as a signal peptide; that stretch reads MKATVLTLAVLFLTGSQA. 2 consecutive repeat copies span residues 68–89 and 90–111. The interval 68-267 is 10 X approximate tandem repeats; it reads LKLLDNWDSV…EEYTKKLSTQ (200 aa). Methionine 110 is modified (methionine sulfoxide). A 3; half-length repeat occupies 112 to 122; the sequence is KDLEEVKAKVQ. 5 consecutive repeat copies span residues 123-144, 145-166, 167-188, 189-210, and 211-232. Methionine 136 is subject to Methionine sulfoxide. One copy of the 9; half-length repeat lies at 233-243; sequence PALEDLRQGLL. Copy 10 of the repeat occupies 244 to 267; sequence PVLESFKVSFLSALEEYTKKLSTQ.

Belongs to the apolipoprotein A1/A4/E family. Homodimer. Interacts with APOA1BP and CLU. Component of a sperm activating protein complex (SPAP), consisting of APOA1, an immunoglobulin heavy chain, an immunoglobulin light chain and albumin. Interacts with NDRG1. Interacts with SCGB3A2. Interacts with NAXE and YJEFN3. Post-translationally, glycosylated. In terms of processing, palmitoylated. Phosphorylation sites are present in the extracellular medium. As to expression, major protein of plasma HDL, also found in chylomicrons.

Its subcellular location is the secreted. Participates in the reverse transport of cholesterol from tissues to the liver for excretion by promoting cholesterol efflux from tissues and by acting as a cofactor for the lecithin cholesterol acyltransferase (LCAT). As part of the SPAP complex, activates spermatozoa motility. This is Apolipoprotein A-I (APOA1) from Papio hamadryas (Hamadryas baboon).